Consider the following 267-residue polypeptide: Neuferricin (267 aa).

An N-terminal signal peptide occupies residues 1–17; it reads MLKYLVALISMVLAVWT. One can recognise a Cytochrome b5 heme-binding domain in the interval 53 to 150; it reads LLTKEQLSLY…RDYTPVGKLI (98 aa).

Belongs to the cytochrome b5 family. MAPR subfamily.

The protein localises to the secreted. Heme-binding protein which promotes neuronal but not astrocyte differentiation. This chain is Neuferricin (cyb5d2), found in Danio rerio (Zebrafish).